A 392-amino-acid polypeptide reads, in one-letter code: Succinate--CoA ligase [ADP-forming] subunit beta (392 aa).

An ATP-grasp domain is found at 9–247 (KEILRVCGVP…LYEEDPKEIE (239 aa)). Residues Lys-49, 56–58 (GRG), Glu-102, Gln-105, and Glu-110 each bind ATP. The Mg(2+) site is built by Asn-202 and Asp-216. Residues Asn-267 and 324 to 326 (GIM) each bind substrate.

The protein belongs to the succinate/malate CoA ligase beta subunit family. Heterotetramer of two alpha and two beta subunits. It depends on Mg(2+) as a cofactor.

It catalyses the reaction succinate + ATP + CoA = succinyl-CoA + ADP + phosphate. The enzyme catalyses GTP + succinate + CoA = succinyl-CoA + GDP + phosphate. It participates in carbohydrate metabolism; tricarboxylic acid cycle; succinate from succinyl-CoA (ligase route): step 1/1. Functionally, succinyl-CoA synthetase functions in the citric acid cycle (TCA), coupling the hydrolysis of succinyl-CoA to the synthesis of either ATP or GTP and thus represents the only step of substrate-level phosphorylation in the TCA. The beta subunit provides nucleotide specificity of the enzyme and binds the substrate succinate, while the binding sites for coenzyme A and phosphate are found in the alpha subunit. This is Succinate--CoA ligase [ADP-forming] subunit beta from Neorickettsia sennetsu (strain ATCC VR-367 / Miyayama) (Ehrlichia sennetsu).